We begin with the raw amino-acid sequence, 268 residues long: Helix-loop-helix protein 6 (268 aa).

The span at Gln-117 to Pro-130 shows a compositional bias: low complexity. The segment at Gln-117–Thr-140 is disordered. Positions Lys-131–Thr-140 are enriched in polar residues. The bHLH domain occupies Ser-173–Leu-225.

In terms of tissue distribution, expressed in the gland cells of the pharynx and weakly in the pharyngeal neuron.

It is found in the nucleus. Transcription factor that regulates the development of the g2 pharyngeal gland cells and pharyngeal gland function and thereby is required for feeding. Required for the expression of a number of genes in the pharyngeal gland, possibly by binding to the E box motif (5'-CANNTG-3') in the promoter region of these genes. Positively regulates the expression of genes encoding mucin-like proteins, which lubricate the pharyngeal tract to ensure efficient passage of the bacterial food source. Exhibits pharyngeal gland-specific positive autoregulation activity. The protein is Helix-loop-helix protein 6 (hlh-6) of Caenorhabditis elegans.